Reading from the N-terminus, the 310-residue chain is Quinolinate synthase (310 aa).

The iminosuccinate site is built by His27 and Ser44. Cys89 provides a ligand contact to [4Fe-4S] cluster. Iminosuccinate is bound by residues 115 to 117 (YVN) and Ser132. A [4Fe-4S] cluster-binding site is contributed by Cys175. Residues 201–203 (HPE) and Thr222 each bind iminosuccinate. Residue Cys267 participates in [4Fe-4S] cluster binding.

Belongs to the quinolinate synthase family. Type 2 subfamily. [4Fe-4S] cluster serves as cofactor.

Its subcellular location is the cytoplasm. It catalyses the reaction iminosuccinate + dihydroxyacetone phosphate = quinolinate + phosphate + 2 H2O + H(+). Its pathway is cofactor biosynthesis; NAD(+) biosynthesis; quinolinate from iminoaspartate: step 1/1. Its function is as follows. Catalyzes the condensation of iminoaspartate with dihydroxyacetone phosphate to form quinolinate. This is Quinolinate synthase from Thermus thermophilus (strain ATCC 27634 / DSM 579 / HB8).